The chain runs to 38 residues: Large ribosomal subunit protein bL36 (38 aa).

It belongs to the bacterial ribosomal protein bL36 family.

In Pelodictyon phaeoclathratiforme (strain DSM 5477 / BU-1), this protein is Large ribosomal subunit protein bL36.